The following is a 122-amino-acid chain: Holo-[acyl-carrier-protein] synthase (122 aa).

Asp9 and Glu58 together coordinate Mg(2+).

Belongs to the P-Pant transferase superfamily. AcpS family. Mg(2+) is required as a cofactor.

The protein resides in the cytoplasm. The catalysed reaction is apo-[ACP] + CoA = holo-[ACP] + adenosine 3',5'-bisphosphate + H(+). In terms of biological role, transfers the 4'-phosphopantetheine moiety from coenzyme A to a Ser of acyl-carrier-protein. The polypeptide is Holo-[acyl-carrier-protein] synthase (Chlamydia felis (strain Fe/C-56) (Chlamydophila felis)).